Consider the following 710-residue polypeptide: Polyribonucleotide nucleotidyltransferase (710 aa).

2 residues coordinate Mg(2+): aspartate 486 and aspartate 492. The KH domain occupies 553–612; sequence PRIHTIKISVDKIKDVIGKGGSVIRALTEETGTTIEIEDDGTVKIAATDGDKAKFAIRRI. Residues 622–690 enclose the S1 motif domain; sequence GRIYNGKVTR…RQGRVRLSIK (69 aa). Positions 690-710 are disordered; it reads KEAGEQAQPEAEAVPAAPEAE. Residues 694-710 show a composition bias toward low complexity; the sequence is EQAQPEAEAVPAAPEAE.

The protein belongs to the polyribonucleotide nucleotidyltransferase family. As to quaternary structure, component of the RNA degradosome, which is a multiprotein complex involved in RNA processing and mRNA degradation. Requires Mg(2+) as cofactor.

Its subcellular location is the cytoplasm. It carries out the reaction RNA(n+1) + phosphate = RNA(n) + a ribonucleoside 5'-diphosphate. Its function is as follows. Involved in mRNA degradation. Catalyzes the phosphorolysis of single-stranded polyribonucleotides processively in the 3'- to 5'-direction. This Erwinia tasmaniensis (strain DSM 17950 / CFBP 7177 / CIP 109463 / NCPPB 4357 / Et1/99) protein is Polyribonucleotide nucleotidyltransferase.